Here is a 603-residue protein sequence, read N- to C-terminus: Sabinene hydrate synthase, chloroplastic (603 aa).

Residues 1-47 (MSTISINHVGLLRNPLHGKSKRASINKSWSLCLPRSSSASRLVKPCR) constitute a chloroplast transit peptide. Mn(2+)-binding residues include Asp-357 and Asp-361. Residues 357–361 (DDVYD) carry the DDXXD motif motif. Homodimerization regions lie at residues 363–369 (YGTLDEL) and 435–472 (EAEWYESGYAPSLEEYLSIASISIGVIPIVIPLEVSIP). Asp-501 and Glu-509 together coordinate Mn(2+).

The protein belongs to the terpene synthase family. As to quaternary structure, homodimer. It depends on Mn(2+) as a cofactor. The cofactor is Mg(2+).

The protein localises to the plastid. It localises to the chloroplast. It catalyses the reaction (2E)-geranyl diphosphate + H2O = sabinene hydrate + diphosphate. The protein operates within secondary metabolite biosynthesis; terpenoid biosynthesis. In terms of biological role, involved in the biosynthesis of phenolic monoterpenes natural products. Monoterpene synthase which catalyzes the conversion of geranyl diphosphate (GPP) to sabinene hydrate, mainly (Z)-sabinene hydrate and to a lower extent (E)-sabinene hydrate, and the formation of minor amounts and traces of several other monoterpenes (e.g. mainly alpha-thujene, alpha-pinene and myrcene). In Thymus vulgaris (Thyme), this protein is Sabinene hydrate synthase, chloroplastic.